A 225-amino-acid polypeptide reads, in one-letter code: Thymidylate kinase (225 aa).

10-17 serves as a coordination point for ATP; that stretch reads GIDGAGKS.

It belongs to the thymidylate kinase family.

The enzyme catalyses dTMP + ATP = dTDP + ADP. Phosphorylation of dTMP to form dTDP in both de novo and salvage pathways of dTTP synthesis. This chain is Thymidylate kinase, found in Polaromonas sp. (strain JS666 / ATCC BAA-500).